A 300-amino-acid polypeptide reads, in one-letter code: tRNA dimethylallyltransferase (300 aa).

ATP is bound at residue 9 to 16 (GPTASGKS). 11–16 (TASGKS) provides a ligand contact to substrate. Positions 34–37 (DSKQ) are interaction with substrate tRNA.

Belongs to the IPP transferase family. In terms of assembly, monomer. Mg(2+) is required as a cofactor.

It carries out the reaction adenosine(37) in tRNA + dimethylallyl diphosphate = N(6)-dimethylallyladenosine(37) in tRNA + diphosphate. Its function is as follows. Catalyzes the transfer of a dimethylallyl group onto the adenine at position 37 in tRNAs that read codons beginning with uridine, leading to the formation of N6-(dimethylallyl)adenosine (i(6)A). The chain is tRNA dimethylallyltransferase from Ehrlichia ruminantium (strain Welgevonden).